Reading from the N-terminus, the 349-residue chain is MQTYGNPNVTYGWWAGNSGVTNRSGKFIAAHAAHTGLIAFGCGAATLVELAGFDPSLPMGHQSSLFLAHLASVGIGFDDAGVWTGVGVANIAILHLILSMVYGGGGLLHSVYFTGDMQDSQVPQARKFKLEWDNPDNQTFILGHHLLFFGVANIWFVEWARIHGIYDPAIEAIRQVNYNLDLTQIWNHQFDFLAIDSLEDVMGGHAFLAFFQLGGGAFHIATKQIGTYTKFKGKELLSAEAILSWSLAGIGWMACVAAFWAATNTTVYPEAWYGEVLQIKFGVSPYWIDTVPGGTAFLGHTTRAALVNVHYYLGFFFIQGHLWHALRAMGFDFKRLLDKTGPFGIPRTL.

6 consecutive transmembrane segments (helical) span residues F27–L47, L57–F77, I91–F113, V201–A221, A241–A261, and L306–L326.

It belongs to the PsbB/PsbC family. IsiA/Pcb subfamily. The antenna complex consists of divinyl chlorophylls (a and b) and divinyl chlorophyll a/b binding proteins and binds more divinyl chlorophyll b than does the antenna complex from high-light-adapted Prochlorococcus. The cofactor is divinyl chlorophyll a. Divinyl chlorophyll b serves as cofactor.

The protein localises to the cellular thylakoid membrane. In terms of biological role, the antenna complex functions as a light receptor, it captures and delivers excitation energy to photosystems II and I. The Prochlorales pcb genes are not related to higher plant LHCs. The chain is Divinyl chlorophyll a/b light-harvesting protein PcbB (pcbB) from Prochlorococcus marinus (strain SARG / CCMP1375 / SS120).